Consider the following 152-residue polypeptide: MLECQSMMEKLSPFVDVASLEIESLRRIKRPKRFSEEESEETENTTNSSNAVFGFPNLPEEPNRDMDQSVLCRICVRLPDGRRIQRSFLKSESVQLLWSFCYSQIGDESSERKRRFKLIQGFPGDYKNLYFGSNTTFEQSGLANSLVSVTWL.

The segment at 32-61 is disordered; the sequence is KRFSEEESEETENTTNSSNAVFGFPNLPEE. The UBX domain occupies 67–150; sequence DQSVLCRICV…GLANSLVSVT (84 aa).

The protein is Plant UBX domain-containing protein 12 of Arabidopsis thaliana (Mouse-ear cress).